Here is a 556-residue protein sequence, read N- to C-terminus: Formate--tetrahydrofolate ligase (556 aa).

65–72 (TPAGEGKS) is a binding site for ATP.

The protein belongs to the formate--tetrahydrofolate ligase family.

It catalyses the reaction (6S)-5,6,7,8-tetrahydrofolate + formate + ATP = (6R)-10-formyltetrahydrofolate + ADP + phosphate. It participates in one-carbon metabolism; tetrahydrofolate interconversion. In Streptococcus pneumoniae (strain Taiwan19F-14), this protein is Formate--tetrahydrofolate ligase.